The primary structure comprises 165 residues: Neurotrophin-3 (165 aa).

The first 3 residues, 1 to 3 (IQS), serve as a signal peptide directing secretion. Residues 4–119 (TSMDQGSLSE…VLNQTSRRKR (116 aa)) constitute a propeptide that is removed on maturation. Residue asparagine 112 is glycosylated (N-linked (GlcNAc...) asparagine).

The protein belongs to the NGF-beta family.

The protein localises to the secreted. Functionally, seems to promote the survival of visceral and proprioceptive sensory neurons. In Morelia spilota (Carpet python), this protein is Neurotrophin-3 (NTF3).